Here is a 3658-residue protein sequence, read N- to C-terminus: E3 ubiquitin-protein ligase UPL2 (3658 aa).

Over residues 884–893 the composition is skewed to basic and acidic residues; sequence DEKKSVDRAS. The tract at residues 884–914 is disordered; it reads DEKKSVDRASDNSVSASSSTAERESDEDSSN. A compositionally biased stretch (low complexity) spans 894 to 903; sequence DNSVSASSST. The UBA domain maps to 1271–1312; sequence QPDEAIVGMIVEMGFSRSRAEDALRRVGTNSVEMAMDWLFTN. Residues 1318–1337 enclose the UIM domain; the sequence is QEDDELAQALALSLGNSSET. 9 disordered regions span residues 1331–1360, 1702–1733, 2004–2038, 2052–2072, 2113–2204, 2293–2313, 2417–2487, 2503–2591, and 2958–2987; these read LGNSSETPKLEDTEKPVDVPQEEAEPKEPP, VSGSEHGFSLNEPLGISENKLHDGSGKCSKSH, AEQLKSEVPNEQKNTDSDERHDSHGTSTSTEVDEL, VDNGQEQPQVSSQSEGERGSS, HVED…DDMV, PLFSRPSQTGNTASVSASAGS, ERET…EGGG, SAQG…PEVN, and SPSSGVPEKLENKPVGEEASSETQKDAESE. Basic and acidic residues predominate over residues 1338–1347; the sequence is PKLEDTEKPV. The span at 2007 to 2027 shows a compositional bias: basic and acidic residues; it reads LKSEVPNEQKNTDSDERHDSH. The span at 2028–2038 shows a compositional bias: polar residues; that stretch reads GTSTSTEVDEL. Acidic residues-rich tracts occupy residues 2117 to 2144 and 2156 to 2204; these read RADDDVDDDMDDEGEDDEGDDEDADSVE and DVED…DDMV. Residues 2297–2313 show a composition bias toward polar residues; that stretch reads RPSQTGNTASVSASAGS. Residues 2422–2431 show a composition bias toward low complexity; the sequence is TTEVQEQQQP. Residues 2503-2518 are compositionally biased toward polar residues; that stretch reads SAQGQSDTSGIQNVSV. A Phosphoserine modification is found at Ser2582. In terms of domain architecture, HECT spans 3317–3658; it reads SPQDLKGRLN…HEANEGFGFA (342 aa). Cys3625 functions as the Glycyl thioester intermediate in the catalytic mechanism.

It belongs to the UPL family. TOM1/PTR1 subfamily. Widely expressed. Expressed in root, stem, cauline and rosette leaf, seedling and flower (at protein level).

The enzyme catalyses S-ubiquitinyl-[E2 ubiquitin-conjugating enzyme]-L-cysteine + [acceptor protein]-L-lysine = [E2 ubiquitin-conjugating enzyme]-L-cysteine + N(6)-ubiquitinyl-[acceptor protein]-L-lysine.. Its pathway is protein modification; protein ubiquitination. Probable E3 ubiquitin-protein ligase which mediates ubiquitination and subsequent proteasomal degradation of target proteins. This chain is E3 ubiquitin-protein ligase UPL2 (UPL2), found in Arabidopsis thaliana (Mouse-ear cress).